A 429-amino-acid polypeptide reads, in one-letter code: Ribosomal RNA small subunit methyltransferase B (429 aa).

S-adenosyl-L-methionine contacts are provided by residues 254-260, D277, D303, and D322; that span reads CAAPGGK. C375 serves as the catalytic Nucleophile.

The protein belongs to the class I-like SAM-binding methyltransferase superfamily. RsmB/NOP family.

The protein localises to the cytoplasm. It catalyses the reaction cytidine(967) in 16S rRNA + S-adenosyl-L-methionine = 5-methylcytidine(967) in 16S rRNA + S-adenosyl-L-homocysteine + H(+). Specifically methylates the cytosine at position 967 (m5C967) of 16S rRNA. This is Ribosomal RNA small subunit methyltransferase B from Cronobacter sakazakii (strain ATCC BAA-894) (Enterobacter sakazakii).